The sequence spans 387 residues: Succinyl-diaminopimelate desuccinylase (387 aa).

A Zn(2+)-binding site is contributed by histidine 73. Aspartate 75 is a catalytic residue. Residue aspartate 106 coordinates Zn(2+). Glutamate 141 acts as the Proton acceptor in catalysis. Positions 142, 170, and 359 each coordinate Zn(2+).

It belongs to the peptidase M20A family. DapE subfamily. As to quaternary structure, homodimer. Requires Zn(2+) as cofactor. Co(2+) is required as a cofactor.

It catalyses the reaction N-succinyl-(2S,6S)-2,6-diaminopimelate + H2O = (2S,6S)-2,6-diaminopimelate + succinate. Its pathway is amino-acid biosynthesis; L-lysine biosynthesis via DAP pathway; LL-2,6-diaminopimelate from (S)-tetrahydrodipicolinate (succinylase route): step 3/3. Functionally, catalyzes the hydrolysis of N-succinyl-L,L-diaminopimelic acid (SDAP), forming succinate and LL-2,6-diaminopimelate (DAP), an intermediate involved in the bacterial biosynthesis of lysine and meso-diaminopimelic acid, an essential component of bacterial cell walls. This Methylorubrum populi (strain ATCC BAA-705 / NCIMB 13946 / BJ001) (Methylobacterium populi) protein is Succinyl-diaminopimelate desuccinylase.